Here is a 458-residue protein sequence, read N- to C-terminus: Argininosuccinate lyase (458 aa).

It belongs to the lyase 1 family. Argininosuccinate lyase subfamily.

It localises to the cytoplasm. The enzyme catalyses 2-(N(omega)-L-arginino)succinate = fumarate + L-arginine. It participates in amino-acid biosynthesis; L-arginine biosynthesis; L-arginine from L-ornithine and carbamoyl phosphate: step 3/3. In Trichlorobacter lovleyi (strain ATCC BAA-1151 / DSM 17278 / SZ) (Geobacter lovleyi), this protein is Argininosuccinate lyase.